Here is a 199-residue protein sequence, read N- to C-terminus: MKTFIIGISGVTNSGKTTLAKNLQKHLPNCSVISQDDFFKPESEIETDKNGFLQYDVLEALNMEKMMSAISCWMESARHSVVSTDQESAEEIPILIIEGFLLFNYKPLDTIWNRSYFLTIPYEECKRRRSTRVYQPPDSPGYFDGHVWPMYLKYRQEMQDITWEVVYLDGTKSEEDLFLQVYEDLIQELAKQKCLQVTA.

10-18 (GVTNSGKTT) lines the ATP pocket. Threonine 17 and aspartate 36 together coordinate Mg(2+). Catalysis depends on aspartate 36, which acts as the Proton acceptor. Substrate-binding positions include 36–39 (DDFF) and 55–56 (YD). Arginine 128 serves as a coordination point for ATP. Residues arginine 129 and 134–135 (YQ) each bind substrate. ATP contacts are provided by residues 132 to 134 (RVY) and 172 to 174 (KSE).

The protein belongs to the uridine kinase family. NRK subfamily. In terms of assembly, monomer.

It catalyses the reaction beta-nicotinamide D-riboside + ATP = beta-nicotinamide D-ribonucleotide + ADP + H(+). The enzyme catalyses beta-D-ribosylnicotinate + ATP = nicotinate beta-D-ribonucleotide + ADP + H(+). The protein operates within cofactor biosynthesis; NAD(+) biosynthesis. Functionally, catalyzes the phosphorylation of nicotinamide riboside (NR) and nicotinic acid riboside (NaR) to form nicotinamide mononucleotide (NMN) and nicotinic acid mononucleotide (NaMN). The enzyme also phosphorylates the antitumor drugs tiazofurin and 3-deazaguanosine. This Homo sapiens (Human) protein is Nicotinamide riboside kinase 1 (NMRK1).